Reading from the N-terminus, the 779-residue chain is Transcription factor SPT20 homolog (779 aa).

Ser-296 bears the Phosphoserine mark. Disordered stretches follow at residues 373-392 (DEESDSQMSPSHSSTDDHSN) and 420-507 (PVKM…IPRK). Residues 424–437 (SHSSSGSASLSQVS) are compositionally biased toward low complexity. Residues 445–454 (TETVSVQSSV) are compositionally biased toward polar residues. A compositionally biased stretch (low complexity) spans 470–479 (SSSGNSSSGN). At Thr-494 the chain carries Phosphothreonine. Phosphoserine occurs at positions 519 and 524. Disordered regions lie at residues 641–677 (QLSQFTPQQPQQPTTCSPQQPGEQGSEQGSTSQEQAL) and 755–779 (LHHHRHTGSQSKSKMKRGTPTTPKF). Residues 755–771 (LHHHRHTGSQSKSKMKR) are compositionally biased toward basic residues.

Belongs to the SPT20 family. As to quaternary structure, interacts with MAPK14. Interacts with ATG9A. Highly expressed in testis, moderately in brain and pituitary gland. Expressed in several fetal tissues, including lung, brain, thymus and kidney. Expression is down-regulated in malignant prostate tissues.

It localises to the nucleus. Required for MAP kinase p38 (MAPK11, MAPK12, MAPK13 and/or MAPK14) activation during gastrulation. Required for down-regulation of E-cadherin during gastrulation by regulating E-cadherin protein level downstream from NCK-interacting kinase (NIK) and independently of the regulation of transcription by FGF signaling and Snail. Required for starvation-induced ATG9A trafficking during autophagy. This Homo sapiens (Human) protein is Transcription factor SPT20 homolog (SUPT20H).